The primary structure comprises 305 residues: Probable xyloglucan endotransglucosylase/hydrolase protein 8 (305 aa).

The signal sequence occupies residues 1-31 (METERRIITSCSAMTALFLFMTALMASSSIA). A GH16 domain is found at 32–231 (ATPTQSFEDN…WKKAPFVSSY (200 aa)). Asn61 and Asn66 each carry an N-linked (GlcNAc...) asparagine glycan. Glu115 (nucleophile) is an active-site residue. The active-site Proton donor is the Glu119. Residue Glu119 participates in xyloglucan binding. An N-linked (GlcNAc...) asparagine glycan is attached at Asn123. 132 to 134 (QTN) provides a ligand contact to xyloglucan. The N-linked (GlcNAc...) asparagine glycan is linked to Asn138. Residues 142 to 144 (NRE), 210 to 211 (DW), and Gly215 each bind xyloglucan. Cystine bridges form between Cys239-Cys248 and Cys286-Cys299. Arg291 is a binding site for xyloglucan.

The protein belongs to the glycosyl hydrolase 16 family. XTH group 1 subfamily. Contains at least one intrachain disulfide bond essential for its enzymatic activity.

It is found in the secreted. Its subcellular location is the cell wall. It localises to the extracellular space. The protein resides in the apoplast. It catalyses the reaction breaks a beta-(1-&gt;4) bond in the backbone of a xyloglucan and transfers the xyloglucanyl segment on to O-4 of the non-reducing terminal glucose residue of an acceptor, which can be a xyloglucan or an oligosaccharide of xyloglucan.. In terms of biological role, catalyzes xyloglucan endohydrolysis (XEH) and/or endotransglycosylation (XET). Cleaves and religates xyloglucan polymers, an essential constituent of the primary cell wall, and thereby participates in cell wall construction of growing tissues. The protein is Probable xyloglucan endotransglucosylase/hydrolase protein 8 (XTH8) of Arabidopsis thaliana (Mouse-ear cress).